Here is a 152-residue protein sequence, read N- to C-terminus: MDEQEIQRLVEEVSLQYFGMPFLHKAMFNSRLRTTGGRYLLNTHNIELNYRYYEMYGKEELVGIVKHELCHYHLHITGRGYKHRDKDFRELLKAVDAPRFCKRMINEEKGKKVYMYECMECSLQYVRRRQINTKRYVCGKCKGKLILIKKTS.

Residues 7 to 148 enclose the SprT-like domain; the sequence is QRLVEEVSLQ…GKCKGKLILI (142 aa). H67 is a Zn(2+) binding site. E68 is an active-site residue. H71 is a Zn(2+) binding site.

It belongs to the SprT family. It depends on Zn(2+) as a cofactor.

It localises to the cytoplasm. This chain is Protein SprT-like, found in Bacillus thuringiensis subsp. konkukian (strain 97-27).